Here is a 518-residue protein sequence, read N- to C-terminus: MIASSKMLLSASILIYFLLNLQSSSAEIADCSFYDTVDISEGQRLSNGSYLYEGLLIPAHLTAKYEFKLLANGDKEQVPSHVRGCVCKLRTCVRFCCPHDHIMDMGECYANMTTEENELLDPMLNVTLDDGSVVQRHYKKELMVQWDLPKPCDDMFYLDNRDIMDEYTLFENGRLLRHYDQVYLDKSEYCLQHRTFGEGNNNSIRIIPHNCLILPSRTGQTVVMITSLICLVLTIAVYLCVKKLMNLEGKCFICYMMCLFFGYLFLLLDLWELSLDFCKAAGFLGYFFVMAAFFWLSIISRHYWKCLTNPCASMNIRSERAFLLYSCFAWAMPLALTGVTYLADNVVNNEEWQPRVGDEGHCWIYTKSWSAMVYFYGPMVLLILFNITMFVLTAKHIIDSKRTLRKIARNEGRIQKLNSDKQNYTQFLLLFTVMGMSWSFEIFSYLVQREKLWVNIFLVADYFNWSQGVIIFVLFILRRKTLVLFKKQIFPKQRAFSRSATQSTIESISQTKRHFNMT.

The N-terminal stretch at 1–26 (MIASSKMLLSASILIYFLLNLQSSSA) is a signal peptide. At 27-220 (EIADCSFYDT…CLILPSRTGQ (194 aa)) the chain is on the extracellular side. Intrachain disulfides connect cysteine 31-cysteine 85, cysteine 87-cysteine 92, cysteine 96-cysteine 190, cysteine 97-cysteine 108, and cysteine 152-cysteine 211. Asparagine 47 carries N-linked (GlcNAc...) asparagine glycosylation. 3 N-linked (GlcNAc...) asparagine glycosylation sites follow: asparagine 111, asparagine 125, and asparagine 201. A helical membrane pass occupies residues 221–241 (TVVMITSLICLVLTIAVYLCV). Residues 242-250 (KKLMNLEGK) lie on the Cytoplasmic side of the membrane. Residues 251-271 (CFICYMMCLFFGYLFLLLDLW) traverse the membrane as a helical segment. At 272 to 279 (ELSLDFCK) the chain is on the extracellular side. The chain crosses the membrane as a helical span at residues 280–300 (AAGFLGYFFVMAAFFWLSIIS). Residues 301–321 (RHYWKCLTNPCASMNIRSERA) lie on the Cytoplasmic side of the membrane. The helical transmembrane segment at 322–342 (FLLYSCFAWAMPLALTGVTYL) threads the bilayer. The Extracellular segment spans residues 343–371 (ADNVVNNEEWQPRVGDEGHCWIYTKSWSA). Residues 372 to 392 (MVYFYGPMVLLILFNITMFVL) traverse the membrane as a helical segment. Residues 393 to 426 (TAKHIIDSKRTLRKIARNEGRIQKLNSDKQNYTQ) lie on the Cytoplasmic side of the membrane. The helical transmembrane segment at 427-447 (FLLLFTVMGMSWSFEIFSYLV) threads the bilayer. Residues 448-455 (QREKLWVN) are Extracellular-facing. Residues 456 to 476 (IFLVADYFNWSQGVIIFVLFI) traverse the membrane as a helical segment. The Cytoplasmic portion of the chain corresponds to 477–518 (LRRKTLVLFKKQIFPKQRAFSRSATQSTIESISQTKRHFNMT).

This sequence belongs to the G-protein coupled receptor 2 family. Mth subfamily.

Its subcellular location is the cell membrane. The chain is Probable G-protein coupled receptor Mth-like 2 (mthl2) from Drosophila melanogaster (Fruit fly).